Here is a 272-residue protein sequence, read N- to C-terminus: Shikimate dehydrogenase (NADP(+)) (272 aa).

Shikimate-binding positions include 14 to 16 and Thr61; that span reads SKS. The Proton acceptor role is filled by Lys65. Glu77 provides a ligand contact to NADP(+). Residues Asn86 and Asp102 each contribute to the shikimate site. Residues 126-130, 149-154, and Met213 each bind NADP(+); these read GAGGA and NRTVSR. Tyr215 contributes to the shikimate binding site. Gly237 provides a ligand contact to NADP(+).

The protein belongs to the shikimate dehydrogenase family. In terms of assembly, homodimer.

The enzyme catalyses shikimate + NADP(+) = 3-dehydroshikimate + NADPH + H(+). It participates in metabolic intermediate biosynthesis; chorismate biosynthesis; chorismate from D-erythrose 4-phosphate and phosphoenolpyruvate: step 4/7. Its function is as follows. Involved in the biosynthesis of the chorismate, which leads to the biosynthesis of aromatic amino acids. Catalyzes the reversible NADPH linked reduction of 3-dehydroshikimate (DHSA) to yield shikimate (SA). The sequence is that of Shikimate dehydrogenase (NADP(+)) from Shigella boydii serotype 18 (strain CDC 3083-94 / BS512).